The sequence spans 439 residues: Nuclear distribution protein PAC1 (439 aa).

Residues 55 to 90 (NSIVRLQSKIMELEKNCEELQKSIDEQQSSTNQISN) adopt a coiled-coil conformation. WD repeat units lie at residues 106–145 (TLDA…LPLQ), 149–193 (AHMD…TLSH), 199–240 (GHEH…CIKS), 243–282 (PHTQ…SMGI), 295–335 (IPDP…FIPH), 355–392 (DHNS…LSTT), and 402–438 (NKGF…TSFM).

The protein belongs to the WD repeat LIS1/nudF family. Self-associates. Interacts with NDL1 and dynein.

It localises to the cytoplasm. It is found in the cytoskeleton. The protein localises to the spindle pole. In terms of biological role, positively regulates the activity of the minus-end directed microtubule motor protein dynein. Plays a central role in positioning the mitotic spindle at the bud neck during cell division. Targets cytoplasmic dynein to microtubule plus ends, thereby promoting dynein-mediated microtubule sliding along the bud cortex and consequently the movement of the mitotic spindle to the bud neck. In Kluyveromyces lactis (strain ATCC 8585 / CBS 2359 / DSM 70799 / NBRC 1267 / NRRL Y-1140 / WM37) (Yeast), this protein is Nuclear distribution protein PAC1.